Here is a 239-residue protein sequence, read N- to C-terminus: Ubiquinone biosynthesis O-methyltransferase (239 aa).

Arg-44, Gly-63, Asp-84, and Met-128 together coordinate S-adenosyl-L-methionine.

This sequence belongs to the methyltransferase superfamily. UbiG/COQ3 family.

The enzyme catalyses a 3-demethylubiquinol + S-adenosyl-L-methionine = a ubiquinol + S-adenosyl-L-homocysteine + H(+). The catalysed reaction is a 3-(all-trans-polyprenyl)benzene-1,2-diol + S-adenosyl-L-methionine = a 2-methoxy-6-(all-trans-polyprenyl)phenol + S-adenosyl-L-homocysteine + H(+). It participates in cofactor biosynthesis; ubiquinone biosynthesis. O-methyltransferase that catalyzes the 2 O-methylation steps in the ubiquinone biosynthetic pathway. This is Ubiquinone biosynthesis O-methyltransferase from Xanthomonas oryzae pv. oryzae (strain MAFF 311018).